A 512-amino-acid chain; its full sequence is MPASRLVRQVSAPRNLFGRLVAQGGFYTAGLQLGSGAVVLPVICAHQGLTWAAGLLYPAFCIGAILGNSLSPLILQRAGQLRHLLMAAISATAAALVVCNAAVPWTGVGVAAVFLATTGAGGVVTGVSSVAYTDMISSMLPAVRRGELLLTQGAAGSVLATGVTLVIVPMLAHGNEMARYHDLLWLGAAGLVCSGIAALFVGPMRSVSVTTATRMPLREIYWMGFAIARSQPWFRRYMTTYLLFVPISLGTTFFSLRAAQSNGSLHVLVILSSIGLVVGSMLWRQINRLFGVRGLLLGSALLNAAAALLCMVAESCGQWVHAWAYGTAFLLATVAAQTVVAASISWISVLAPERYRATLICVGSTLAAVEATVLGVALGGIAQKHATIWPVVVVLTLAVIAAVASLRAPTRIGVTADTSPQAATLQAYRPATPNPIHSDERSTPPDHLSVRRGQLRHVWDSRRPAPPLNRPSCRRAARRPAPGKPAAALPQPRHPAVGVREGAPLDAGQRIA.

Helical transmembrane passes span 25 to 45 (GFYT…VICA), 55 to 75 (LLYP…PLIL), 96 to 116 (LVVC…VFLA), 123 to 143 (VVTG…LPAV), 148 to 168 (LLLT…LVIV), 183 to 203 (LLWL…FVGP), 238 to 258 (MTTY…SLRA), 263 to 283 (GSLH…SMLW), 294 to 314 (GLLL…MVAE), 329 to 349 (FLLA…WISV), 359 to 379 (LICV…VALG), and 386 to 406 (ATIW…VASL). Positions 428–512 (YRPATPNPIH…APLDAGQRIA (85 aa)) are disordered.

It is found in the cell membrane. This is an uncharacterized protein from Mycobacterium tuberculosis (strain CDC 1551 / Oshkosh).